A 300-amino-acid chain; its full sequence is Phosphatidylglycerol--prolipoprotein diacylglyceryl transferase (300 aa).

A run of 7 helical transmembrane segments spans residues 17–37 (LAIR…LWFG), 59–79 (MLFY…VLFY), 94–114 (VWEG…AMML), 129–149 (FIAP…FING), 204–224 (SQIY…WLYA), 230–250 (MGAV…AAEF), and 265–285 (LSMG…MLVW). An a 1,2-diacyl-sn-glycero-3-phospho-(1'-sn-glycerol)-binding site is contributed by Arg142.

This sequence belongs to the Lgt family.

It is found in the cell inner membrane. It carries out the reaction L-cysteinyl-[prolipoprotein] + a 1,2-diacyl-sn-glycero-3-phospho-(1'-sn-glycerol) = an S-1,2-diacyl-sn-glyceryl-L-cysteinyl-[prolipoprotein] + sn-glycerol 1-phosphate + H(+). It functions in the pathway protein modification; lipoprotein biosynthesis (diacylglyceryl transfer). Catalyzes the transfer of the diacylglyceryl group from phosphatidylglycerol to the sulfhydryl group of the N-terminal cysteine of a prolipoprotein, the first step in the formation of mature lipoproteins. In Ralstonia pickettii (strain 12J), this protein is Phosphatidylglycerol--prolipoprotein diacylglyceryl transferase.